Here is a 407-residue protein sequence, read N- to C-terminus: Tyrosine--tRNA ligase (407 aa).

A 'HIGH' region motif is present at residues 47–56 (PTAPDLHLGA). The short motif at 231 to 235 (KMSKS) is the 'KMSKS' region element. Position 234 (K234) interacts with ATP. The S4 RNA-binding domain maps to 342–403 (PRLSQLLVQV…GKRHFARVAL (62 aa)).

It belongs to the class-I aminoacyl-tRNA synthetase family. TyrS type 2 subfamily. Homodimer.

Its subcellular location is the cytoplasm. It catalyses the reaction tRNA(Tyr) + L-tyrosine + ATP = L-tyrosyl-tRNA(Tyr) + AMP + diphosphate + H(+). Functionally, catalyzes the attachment of tyrosine to tRNA(Tyr) in a two-step reaction: tyrosine is first activated by ATP to form Tyr-AMP and then transferred to the acceptor end of tRNA(Tyr). In Acidithiobacillus ferrooxidans (Thiobacillus ferrooxidans), this protein is Tyrosine--tRNA ligase.